Here is a 156-residue protein sequence, read N- to C-terminus: Protein-export protein SecB (156 aa).

The protein belongs to the SecB family. In terms of assembly, homotetramer, a dimer of dimers. One homotetramer interacts with 1 SecA dimer.

It is found in the cytoplasm. One of the proteins required for the normal export of preproteins out of the cell cytoplasm. It is a molecular chaperone that binds to a subset of precursor proteins, maintaining them in a translocation-competent state. It also specifically binds to its receptor SecA. This chain is Protein-export protein SecB, found in Desulfotalea psychrophila (strain LSv54 / DSM 12343).